A 539-amino-acid polypeptide reads, in one-letter code: BTB/POZ domain-containing protein 6 (539 aa).

An N-terminal signal peptide occupies residues 1 to 23 (MLLPLACLHGRVAQCLTSLLVLA). Positions 137-207 (ADVHFIVGAL…MYSDEIDLEA (71 aa)) constitute a BTB domain.

It localises to the cytoplasm. Adapter protein for the cul3 E3 ubiquitin-protein ligase complex. Involved in late neuronal development and muscle formation. This chain is BTB/POZ domain-containing protein 6 (Btbd6), found in Mus musculus (Mouse).